We begin with the raw amino-acid sequence, 78 residues long: Chondrosarcoma-associated gene 1 protein (78 aa).

Positions 1-19 (MSATTACWPAFTVLGEARG) are cleaved as a signal peptide. Positions 35-78 (KMSRKPRASSPFSNNHPSTPKRFPRQPRREKGPVKEVPGTKGSP) are disordered.

Expressed in chondrosarcoma, melanoma, cartilage and testis, but not in other normal tissues.

The protein localises to the cytoplasm. It localises to the cytoskeleton. Its subcellular location is the microtubule organizing center. The protein resides in the centrosome. It is found in the spindle pole. Functionally, may play an important role in maintaining centrosome integrity during mitosis. The sequence is that of Chondrosarcoma-associated gene 1 protein from Homo sapiens (Human).